Consider the following 401-residue polypeptide: uncharacterized protein (401 aa).

K242 is subject to N6-(pyridoxal phosphate)lysine.

This sequence belongs to the class-I pyridoxal-phosphate-dependent aminotransferase family. In terms of assembly, homodimer. It depends on pyridoxal 5'-phosphate as a cofactor.

It localises to the cytoplasm. This is an uncharacterized protein from Saccharolobus solfataricus (strain ATCC 35092 / DSM 1617 / JCM 11322 / P2) (Sulfolobus solfataricus).